We begin with the raw amino-acid sequence, 351 residues long: Heat-inducible transcription repressor HrcA (351 aa).

This sequence belongs to the HrcA family.

Functionally, negative regulator of class I heat shock genes (grpE-dnaK-dnaJ and groELS operons). Prevents heat-shock induction of these operons. The sequence is that of Heat-inducible transcription repressor HrcA from Acetivibrio thermocellus (strain ATCC 27405 / DSM 1237 / JCM 9322 / NBRC 103400 / NCIMB 10682 / NRRL B-4536 / VPI 7372) (Clostridium thermocellum).